A 334-amino-acid polypeptide reads, in one-letter code: Holliday junction branch migration complex subunit RuvB (334 aa).

Residues 4–184 (ADRIISASPK…FGIVQRLEFY (181 aa)) form a large ATPase domain (RuvB-L) region. Residues Ile23, Arg24, Gly65, Lys68, Thr69, Thr70, 131-133 (EDY), Arg174, Tyr184, and Arg221 each bind ATP. Thr69 serves as a coordination point for Mg(2+). The tract at residues 185-255 (SVDDLTSIVK…IAKQALAMLD (71 aa)) is small ATPAse domain (RuvB-S). Residues 258-334 (SEGFDFMDIK…YAHLGIAKLD (77 aa)) form a head domain (RuvB-H) region. DNA-binding residues include Arg294, Arg313, and Arg318.

It belongs to the RuvB family. In terms of assembly, homohexamer. Forms an RuvA(8)-RuvB(12)-Holliday junction (HJ) complex. HJ DNA is sandwiched between 2 RuvA tetramers; dsDNA enters through RuvA and exits via RuvB. An RuvB hexamer assembles on each DNA strand where it exits the tetramer. Each RuvB hexamer is contacted by two RuvA subunits (via domain III) on 2 adjacent RuvB subunits; this complex drives branch migration. In the full resolvosome a probable DNA-RuvA(4)-RuvB(12)-RuvC(2) complex forms which resolves the HJ.

The protein resides in the cytoplasm. The catalysed reaction is ATP + H2O = ADP + phosphate + H(+). In terms of biological role, the RuvA-RuvB-RuvC complex processes Holliday junction (HJ) DNA during genetic recombination and DNA repair, while the RuvA-RuvB complex plays an important role in the rescue of blocked DNA replication forks via replication fork reversal (RFR). RuvA specifically binds to HJ cruciform DNA, conferring on it an open structure. The RuvB hexamer acts as an ATP-dependent pump, pulling dsDNA into and through the RuvAB complex. RuvB forms 2 homohexamers on either side of HJ DNA bound by 1 or 2 RuvA tetramers; 4 subunits per hexamer contact DNA at a time. Coordinated motions by a converter formed by DNA-disengaged RuvB subunits stimulates ATP hydrolysis and nucleotide exchange. Immobilization of the converter enables RuvB to convert the ATP-contained energy into a lever motion, pulling 2 nucleotides of DNA out of the RuvA tetramer per ATP hydrolyzed, thus driving DNA branch migration. The RuvB motors rotate together with the DNA substrate, which together with the progressing nucleotide cycle form the mechanistic basis for DNA recombination by continuous HJ branch migration. Branch migration allows RuvC to scan DNA until it finds its consensus sequence, where it cleaves and resolves cruciform DNA. The chain is Holliday junction branch migration complex subunit RuvB from Actinobacillus pleuropneumoniae serotype 5b (strain L20).